Consider the following 171-residue polypeptide: NADH-quinone oxidoreductase subunit I 1 (171 aa).

4Fe-4S ferredoxin-type domains follow at residues 39-71 and 81-110; these read IVLT…LSKA and EHFR…LTPD. Residues cysteine 51, cysteine 54, cysteine 57, cysteine 61, cysteine 90, cysteine 93, cysteine 96, and cysteine 100 each coordinate [4Fe-4S] cluster.

This sequence belongs to the complex I 23 kDa subunit family. In terms of assembly, NDH-1 is composed of 14 different subunits. Subunits NuoA, H, J, K, L, M, N constitute the membrane sector of the complex. [4Fe-4S] cluster is required as a cofactor.

The protein localises to the cell inner membrane. The enzyme catalyses a quinone + NADH + 5 H(+)(in) = a quinol + NAD(+) + 4 H(+)(out). Functionally, NDH-1 shuttles electrons from NADH, via FMN and iron-sulfur (Fe-S) centers, to quinones in the respiratory chain. The immediate electron acceptor for the enzyme in this species is believed to be ubiquinone. Couples the redox reaction to proton translocation (for every two electrons transferred, four hydrogen ions are translocated across the cytoplasmic membrane), and thus conserves the redox energy in a proton gradient. The sequence is that of NADH-quinone oxidoreductase subunit I 1 from Rhodopseudomonas palustris (strain HaA2).